Here is a 106-residue protein sequence, read N- to C-terminus: Thiosulfate sulfurtransferase GlpE (106 aa).

Residues 17–105 (EQNEARLVDI…SYRAELPVIA (89 aa)) form the Rhodanese domain. Cys-65 functions as the Cysteine persulfide intermediate in the catalytic mechanism.

This sequence belongs to the GlpE family.

Its subcellular location is the cytoplasm. The catalysed reaction is thiosulfate + hydrogen cyanide = thiocyanate + sulfite + 2 H(+). It catalyses the reaction thiosulfate + [thioredoxin]-dithiol = [thioredoxin]-disulfide + hydrogen sulfide + sulfite + 2 H(+). Its function is as follows. Transferase that catalyzes the transfer of sulfur from thiosulfate to thiophilic acceptors such as cyanide or dithiols. May function in a CysM-independent thiosulfate assimilation pathway by catalyzing the conversion of thiosulfate to sulfite, which can then be used for L-cysteine biosynthesis. The protein is Thiosulfate sulfurtransferase GlpE of Vibrio atlanticus (strain LGP32) (Vibrio splendidus (strain Mel32)).